The following is a 432-amino-acid chain: Putative D-alanyl-D-alanine carboxypeptidase (432 aa).

A helical; Signal-anchor transmembrane segment spans residues 7–25; it reads ATVLLTFSLSAFAVEYPVL.

This sequence belongs to the peptidase S12 family. YfeW subfamily.

The protein localises to the cell inner membrane. The enzyme catalyses Preferential cleavage: (Ac)2-L-Lys-D-Ala-|-D-Ala. Also transpeptidation of peptidyl-alanyl moieties that are N-acyl substituents of D-alanine.. In Salmonella enteritidis PT4 (strain P125109), this protein is Putative D-alanyl-D-alanine carboxypeptidase.